A 380-amino-acid chain; its full sequence is Erythronate-4-phosphate dehydrogenase (380 aa).

The substrate site is built by Ser-45 and Thr-66. Residues Asp-146 and Thr-174 each contribute to the NAD(+) site. Residue Arg-207 is part of the active site. Asp-231 contributes to the NAD(+) binding site. Residue Glu-236 is part of the active site. Catalysis depends on His-253, which acts as the Proton donor. Gly-256 is a binding site for NAD(+). Residue Tyr-257 participates in substrate binding.

Belongs to the D-isomer specific 2-hydroxyacid dehydrogenase family. PdxB subfamily. Homodimer.

It is found in the cytoplasm. The enzyme catalyses 4-phospho-D-erythronate + NAD(+) = (R)-3-hydroxy-2-oxo-4-phosphooxybutanoate + NADH + H(+). It functions in the pathway cofactor biosynthesis; pyridoxine 5'-phosphate biosynthesis; pyridoxine 5'-phosphate from D-erythrose 4-phosphate: step 2/5. Catalyzes the oxidation of erythronate-4-phosphate to 3-hydroxy-2-oxo-4-phosphonooxybutanoate. This chain is Erythronate-4-phosphate dehydrogenase, found in Pseudomonas fluorescens (strain ATCC BAA-477 / NRRL B-23932 / Pf-5).